A 394-amino-acid chain; its full sequence is Elongation factor Tu (394 aa).

The tr-type G domain occupies 10 to 204 (KPHVNIGTIG…AVDSYIPQPV (195 aa)). The interval 19-26 (GHVDHGKT) is G1. Position 19 to 26 (19 to 26 (GHVDHGKT)) interacts with GTP. Thr26 contacts Mg(2+). The segment at 60-64 (GITIS) is G2. Positions 81-84 (DCPG) are G3. GTP-binding positions include 81–85 (DCPGH) and 136–139 (NKVD). A G4 region spans residues 136–139 (NKVD). The G5 stretch occupies residues 174 to 176 (SAL).

Belongs to the TRAFAC class translation factor GTPase superfamily. Classic translation factor GTPase family. EF-Tu/EF-1A subfamily. Monomer.

Its subcellular location is the cytoplasm. It carries out the reaction GTP + H2O = GDP + phosphate + H(+). GTP hydrolase that promotes the GTP-dependent binding of aminoacyl-tRNA to the A-site of ribosomes during protein biosynthesis. The sequence is that of Elongation factor Tu from Rickettsia helvetica.